The sequence spans 554 residues: Glutamine--tRNA ligase (554 aa).

Positions 33–43 (PEPNGYLHIGH) match the 'HIGH' region motif. ATP-binding positions include 34-36 (EPN) and 40-46 (HIGHAKS). Positions 66 and 210 each coordinate L-glutamine. ATP contacts are provided by residues T229, 259-260 (RL), and 267-269 (MSK). A 'KMSKS' region motif is present at residues 266 to 270 (VMSKR).

This sequence belongs to the class-I aminoacyl-tRNA synthetase family. Monomer.

The protein localises to the cytoplasm. The catalysed reaction is tRNA(Gln) + L-glutamine + ATP = L-glutaminyl-tRNA(Gln) + AMP + diphosphate. This chain is Glutamine--tRNA ligase, found in Clostridioides difficile (strain 630) (Peptoclostridium difficile).